We begin with the raw amino-acid sequence, 168 residues long: RxLR effector protein CRE8 (168 aa).

The first 23 residues, 1-23, serve as a signal peptide directing secretion; sequence MRLPSILVVAASTLFLHYGYTSA. Residues 54–69 carry the RxLR-dEER motif; it reads RFLRDGKIAEGDNEER.

Belongs to the RxLR effector family.

Its subcellular location is the secreted. It is found in the host cell. Functionally, effector that is involved in host plant infection. Contributes to virulence during the early infection stage, by inhibiting plant defense responses induced by both PAMP-triggered immunity (PTI) and effector-triggered immunity (ETI). The sequence is that of RxLR effector protein CRE8 from Phytophthora infestans (strain T30-4) (Potato late blight agent).